The primary structure comprises 273 residues: 4-hydroxy-tetrahydrodipicolinate reductase (273 aa).

NAD(+) is bound by residues 12 to 17 (GAGGRM) and glutamate 38. Arginine 39 lines the NADP(+) pocket. Residues 102-104 (GTT) and 126-129 (AANF) each bind NAD(+). Histidine 159 functions as the Proton donor/acceptor in the catalytic mechanism. Histidine 160 lines the (S)-2,3,4,5-tetrahydrodipicolinate pocket. Lysine 163 serves as the catalytic Proton donor. 169-170 (GT) contributes to the (S)-2,3,4,5-tetrahydrodipicolinate binding site.

The protein belongs to the DapB family. Homotetramer.

Its subcellular location is the cytoplasm. The enzyme catalyses (S)-2,3,4,5-tetrahydrodipicolinate + NAD(+) + H2O = (2S,4S)-4-hydroxy-2,3,4,5-tetrahydrodipicolinate + NADH + H(+). It catalyses the reaction (S)-2,3,4,5-tetrahydrodipicolinate + NADP(+) + H2O = (2S,4S)-4-hydroxy-2,3,4,5-tetrahydrodipicolinate + NADPH + H(+). Its pathway is amino-acid biosynthesis; L-lysine biosynthesis via DAP pathway; (S)-tetrahydrodipicolinate from L-aspartate: step 4/4. In terms of biological role, catalyzes the conversion of 4-hydroxy-tetrahydrodipicolinate (HTPA) to tetrahydrodipicolinate. The protein is 4-hydroxy-tetrahydrodipicolinate reductase of Escherichia coli O127:H6 (strain E2348/69 / EPEC).